A 291-amino-acid polypeptide reads, in one-letter code: Phosphatidylserine decarboxylase proenzyme (291 aa).

Residues Asp-93, His-150, and Ser-253 each act as charge relay system; for autoendoproteolytic cleavage activity in the active site. Ser-253 acts as the Schiff-base intermediate with substrate; via pyruvic acid; for decarboxylase activity in catalysis. The residue at position 253 (Ser-253) is a Pyruvic acid (Ser); by autocatalysis.

This sequence belongs to the phosphatidylserine decarboxylase family. PSD-B subfamily. Prokaryotic type I sub-subfamily. Heterodimer of a large membrane-associated beta subunit and a small pyruvoyl-containing alpha subunit. Pyruvate serves as cofactor. Post-translationally, is synthesized initially as an inactive proenzyme. Formation of the active enzyme involves a self-maturation process in which the active site pyruvoyl group is generated from an internal serine residue via an autocatalytic post-translational modification. Two non-identical subunits are generated from the proenzyme in this reaction, and the pyruvate is formed at the N-terminus of the alpha chain, which is derived from the carboxyl end of the proenzyme. The autoendoproteolytic cleavage occurs by a canonical serine protease mechanism, in which the side chain hydroxyl group of the serine supplies its oxygen atom to form the C-terminus of the beta chain, while the remainder of the serine residue undergoes an oxidative deamination to produce ammonia and the pyruvoyl prosthetic group on the alpha chain. During this reaction, the Ser that is part of the protease active site of the proenzyme becomes the pyruvoyl prosthetic group, which constitutes an essential element of the active site of the mature decarboxylase.

It localises to the cell membrane. The enzyme catalyses a 1,2-diacyl-sn-glycero-3-phospho-L-serine + H(+) = a 1,2-diacyl-sn-glycero-3-phosphoethanolamine + CO2. It participates in phospholipid metabolism; phosphatidylethanolamine biosynthesis; phosphatidylethanolamine from CDP-diacylglycerol: step 2/2. Its function is as follows. Catalyzes the formation of phosphatidylethanolamine (PtdEtn) from phosphatidylserine (PtdSer). In Alcanivorax borkumensis (strain ATCC 700651 / DSM 11573 / NCIMB 13689 / SK2), this protein is Phosphatidylserine decarboxylase proenzyme.